A 220-amino-acid polypeptide reads, in one-letter code: UPF0319 protein YccT (220 aa).

Positions 1 to 20 are cleaved as a signal peptide; sequence MKTGALTTFLALCLPVTVFA.

The protein belongs to the UPF0319 family.

The chain is UPF0319 protein YccT from Salmonella schwarzengrund (strain CVM19633).